Reading from the N-terminus, the 280-residue chain is Equatorin (280 aa).

Positions 1 to 19 are cleaved as a signal peptide; that stretch reads MDFILLIFLSGVFLPNIFS. Residues 20–183 lie on the Vesicular side of the membrane; sequence LQPTVEQDPG…LSELEEIKLK (164 aa). Positions 112-131 are disordered; it reads ATASGEEDKRSEPSRKSSTP. A compositionally biased stretch (basic and acidic residues) spans 117 to 126; that stretch reads EEDKRSEPSR. N145 carries an N-linked (GlcNAc...) asparagine glycan. The helical transmembrane segment at 184 to 204 threads the bilayer; that stretch reads LMLGISLMTLILLIPLLIFCF. Residues 205–280 are Cytoplasmic-facing; sequence ATLYKLRHLR…AEVTEERISE (76 aa). Position 279 is a phosphoserine (S279).

In terms of assembly, interacts with SNAP25. Highly N- and O-glycosylated; contains sialic acid. In terms of tissue distribution, highly expressed in testis and epididymis. Low expression in other tissues.

The protein resides in the cytoplasmic vesicle. The protein localises to the secretory vesicle. Its subcellular location is the acrosome membrane. It localises to the acrosome inner membrane. It is found in the acrosome outer membrane. Its function is as follows. Acrosomal membrane-anchored protein involved in the process of fertilization and in acrosome biogenesis. The sequence is that of Equatorin (Eqtn) from Rattus norvegicus (Rat).